The chain runs to 239 residues: Sugar fermentation stimulation protein homolog (239 aa).

Belongs to the SfsA family.

In Shewanella woodyi (strain ATCC 51908 / MS32), this protein is Sugar fermentation stimulation protein homolog.